The sequence spans 430 residues: 3-phosphoshikimate 1-carboxyvinyltransferase (430 aa).

Residues Lys-21, Ser-22, and Arg-26 each coordinate 3-phosphoshikimate. A phosphoenolpyruvate-binding site is contributed by Lys-21. Gly-95 and Arg-123 together coordinate phosphoenolpyruvate. Positions 167, 169, 315, and 342 each coordinate 3-phosphoshikimate. Residue Gln-169 participates in phosphoenolpyruvate binding. The Proton acceptor role is filled by Asp-315. 2 residues coordinate phosphoenolpyruvate: Arg-346 and Arg-390.

It belongs to the EPSP synthase family. As to quaternary structure, monomer.

It localises to the cytoplasm. The catalysed reaction is 3-phosphoshikimate + phosphoenolpyruvate = 5-O-(1-carboxyvinyl)-3-phosphoshikimate + phosphate. It participates in metabolic intermediate biosynthesis; chorismate biosynthesis; chorismate from D-erythrose 4-phosphate and phosphoenolpyruvate: step 6/7. In terms of biological role, catalyzes the transfer of the enolpyruvyl moiety of phosphoenolpyruvate (PEP) to the 5-hydroxyl of shikimate-3-phosphate (S3P) to produce enolpyruvyl shikimate-3-phosphate and inorganic phosphate. This Endomicrobium trichonymphae protein is 3-phosphoshikimate 1-carboxyvinyltransferase.